Reading from the N-terminus, the 351-residue chain is Methylxanthine N1-demethylase NdmA (351 aa).

In terms of domain architecture, Rieske spans 17–125 (WHPVCTVTEL…CEERYGLIWI (109 aa)). Residues C62, H64, C81, and H84 each contribute to the [2Fe-2S] cluster site.

It depends on [2Fe-2S] cluster as a cofactor.

It catalyses the reaction caffeine + NADH + O2 + H(+) = theobromine + formaldehyde + NAD(+) + H2O. It carries out the reaction caffeine + NADPH + O2 + H(+) = theobromine + formaldehyde + NADP(+) + H2O. The catalysed reaction is theophylline + NADH + O2 + H(+) = 3-methylxanthine + formaldehyde + NAD(+) + H2O. The enzyme catalyses theophylline + NADPH + O2 + H(+) = 3-methylxanthine + formaldehyde + NADP(+) + H2O. It catalyses the reaction 1,7-dimethylxanthine + NADH + O2 + H(+) = 7-methylxanthine + formaldehyde + NAD(+) + H2O. It carries out the reaction 1,7-dimethylxanthine + NADPH + O2 + H(+) = 7-methylxanthine + formaldehyde + NADP(+) + H2O. It participates in alkaloid degradation. Its function is as follows. Involved in the caffeine degradation, which is the essential first step for assimilating the carbon and nitrogen in caffeine. Catalyzes the N1-demethylation of caffeine to produce theobromine and formaldehyde. Also catalyzes the N1-demethylation of theophylline, paraxanthine, and 1-methylxanthine to 3-methylxanthine, 7-methylxanthine, and xanthine, respectively. NADH is the preferred substrate. The polypeptide is Methylxanthine N1-demethylase NdmA (ndmA) (Pseudomonas putida (Arthrobacter siderocapsulatus)).